Consider the following 176-residue polypeptide: ATP-dependent protease subunit HslV (176 aa).

Threonine 6 is a catalytic residue. Na(+)-binding residues include serine 161, cysteine 164, and threonine 167.

The protein belongs to the peptidase T1B family. HslV subfamily. In terms of assembly, a double ring-shaped homohexamer of HslV is capped on each side by a ring-shaped HslU homohexamer. The assembly of the HslU/HslV complex is dependent on binding of ATP.

Its subcellular location is the cytoplasm. The enzyme catalyses ATP-dependent cleavage of peptide bonds with broad specificity.. With respect to regulation, allosterically activated by HslU binding. Functionally, protease subunit of a proteasome-like degradation complex believed to be a general protein degrading machinery. The polypeptide is ATP-dependent protease subunit HslV (Pseudothermotoga lettingae (strain ATCC BAA-301 / DSM 14385 / NBRC 107922 / TMO) (Thermotoga lettingae)).